We begin with the raw amino-acid sequence, 498 residues long: ATP synthase subunit beta, chloroplastic (498 aa).

ATP is bound at residue 172 to 179 (GGAGVGKT).

This sequence belongs to the ATPase alpha/beta chains family. In terms of assembly, F-type ATPases have 2 components, CF(1) - the catalytic core - and CF(0) - the membrane proton channel. CF(1) has five subunits: alpha(3), beta(3), gamma(1), delta(1), epsilon(1). CF(0) has four main subunits: a(1), b(1), b'(1) and c(9-12).

The protein localises to the plastid. It localises to the chloroplast thylakoid membrane. The enzyme catalyses ATP + H2O + 4 H(+)(in) = ADP + phosphate + 5 H(+)(out). Functionally, produces ATP from ADP in the presence of a proton gradient across the membrane. The catalytic sites are hosted primarily by the beta subunits. The polypeptide is ATP synthase subunit beta, chloroplastic (Populus trichocarpa (Western balsam poplar)).